We begin with the raw amino-acid sequence, 96 residues long: Large ribosomal subunit protein eL21 (96 aa).

Residues 1–22 (MRKSKGFKSRSRYKLKRSIRPK) form a disordered region.

This sequence belongs to the eukaryotic ribosomal protein eL21 family.

This Methanosphaera stadtmanae (strain ATCC 43021 / DSM 3091 / JCM 11832 / MCB-3) protein is Large ribosomal subunit protein eL21.